Consider the following 623-residue polypeptide: Xaa-Pro aminopeptidase 1 (623 aa).

Arginine 77 contacts a peptide. Lysine 304 carries the post-translational modification N6-acetyllysine. Residue histidine 395 participates in a peptide binding. Residues aspartate 415, aspartate 426, and histidine 489 each coordinate Mn(2+). Residues histidine 489, histidine 498, and glutamate 523 each contribute to the a peptide site. 2 residues coordinate Mn(2+): glutamate 523 and glutamate 537.

The protein belongs to the peptidase M24B family. As to quaternary structure, homodimer. It depends on Mn(2+) as a cofactor.

The protein localises to the cytoplasm. Its subcellular location is the cytosol. It carries out the reaction Release of any N-terminal amino acid, including proline, that is linked to proline, even from a dipeptide or tripeptide.. Metalloaminopeptidase that catalyzes the removal of a penultimate prolyl residue from the N-termini of peptides, such as Arg-Pro-Pro. Contributes to the degradation of bradykinin. The polypeptide is Xaa-Pro aminopeptidase 1 (Mus musculus (Mouse)).